A 409-amino-acid polypeptide reads, in one-letter code: NADH-quinone oxidoreductase subunit D (409 aa).

Belongs to the complex I 49 kDa subunit family. As to quaternary structure, NDH-1 is composed of 14 different subunits. Subunits NuoB, C, D, E, F, and G constitute the peripheral sector of the complex.

The protein resides in the cell inner membrane. The catalysed reaction is a quinone + NADH + 5 H(+)(in) = a quinol + NAD(+) + 4 H(+)(out). Its function is as follows. NDH-1 shuttles electrons from NADH, via FMN and iron-sulfur (Fe-S) centers, to quinones in the respiratory chain. The immediate electron acceptor for the enzyme in this species is believed to be ubiquinone. Couples the redox reaction to proton translocation (for every two electrons transferred, four hydrogen ions are translocated across the cytoplasmic membrane), and thus conserves the redox energy in a proton gradient. This is NADH-quinone oxidoreductase subunit D from Campylobacter curvus (strain 525.92).